Consider the following 265-residue polypeptide: Thiazole synthase (265 aa).

The active-site Schiff-base intermediate with DXP is the K107. 1-deoxy-D-xylulose 5-phosphate contacts are provided by residues G168, 194–195, and 216–217; these read AG and NT.

The protein belongs to the ThiG family. Homotetramer. Forms heterodimers with either ThiH or ThiS.

The protein resides in the cytoplasm. It catalyses the reaction [ThiS sulfur-carrier protein]-C-terminal-Gly-aminoethanethioate + 2-iminoacetate + 1-deoxy-D-xylulose 5-phosphate = [ThiS sulfur-carrier protein]-C-terminal Gly-Gly + 2-[(2R,5Z)-2-carboxy-4-methylthiazol-5(2H)-ylidene]ethyl phosphate + 2 H2O + H(+). It functions in the pathway cofactor biosynthesis; thiamine diphosphate biosynthesis. Its function is as follows. Catalyzes the rearrangement of 1-deoxy-D-xylulose 5-phosphate (DXP) to produce the thiazole phosphate moiety of thiamine. Sulfur is provided by the thiocarboxylate moiety of the carrier protein ThiS. In vitro, sulfur can be provided by H(2)S. The protein is Thiazole synthase of Pseudomonas paraeruginosa (strain DSM 24068 / PA7) (Pseudomonas aeruginosa (strain PA7)).